The following is a 153-amino-acid chain: Prophage Rz endopeptidase RzpD (153 aa).

Functionally, necessary for host cell lysis. It is believed to code for an endopeptidase that cleaves the amino-carboxyl cross-link between the diaminopimelic acid and D-alanine residues in the murein component of the bacterial cell wall. In Escherichia coli (strain K12), this protein is Prophage Rz endopeptidase RzpD (rzpD).